The primary structure comprises 183 residues: Crossover junction endodeoxyribonuclease RuvC (183 aa).

Catalysis depends on residues Asp-7, Glu-66, and Asp-138. Asp-7, Glu-66, and Asp-138 together coordinate Mg(2+).

The protein belongs to the RuvC family. In terms of assembly, homodimer which binds Holliday junction (HJ) DNA. The HJ becomes 2-fold symmetrical on binding to RuvC with unstacked arms; it has a different conformation from HJ DNA in complex with RuvA. In the full resolvosome a probable DNA-RuvA(4)-RuvB(12)-RuvC(2) complex forms which resolves the HJ. Requires Mg(2+) as cofactor.

The protein localises to the cytoplasm. The enzyme catalyses Endonucleolytic cleavage at a junction such as a reciprocal single-stranded crossover between two homologous DNA duplexes (Holliday junction).. Functionally, the RuvA-RuvB-RuvC complex processes Holliday junction (HJ) DNA during genetic recombination and DNA repair. Endonuclease that resolves HJ intermediates. Cleaves cruciform DNA by making single-stranded nicks across the HJ at symmetrical positions within the homologous arms, yielding a 5'-phosphate and a 3'-hydroxyl group; requires a central core of homology in the junction. The consensus cleavage sequence is 5'-(A/T)TT(C/G)-3'. Cleavage occurs on the 3'-side of the TT dinucleotide at the point of strand exchange. HJ branch migration catalyzed by RuvA-RuvB allows RuvC to scan DNA until it finds its consensus sequence, where it cleaves and resolves the cruciform DNA. The protein is Crossover junction endodeoxyribonuclease RuvC of Burkholderia ambifaria (strain ATCC BAA-244 / DSM 16087 / CCUG 44356 / LMG 19182 / AMMD) (Burkholderia cepacia (strain AMMD)).